Reading from the N-terminus, the 99-residue chain is Protein Tat (99 aa).

Residues 1 to 20 (MELVDPNLDPWNHPGSQPTT) are disordered. The segment at 1 to 24 (MELVDPNLDPWNHPGSQPTTPCTR) is interaction with human CREBBP. Residues 1-48 (MELVDPNLDPWNHPGSQPTTPCTRCYCKWCCFHCYWCFTTKGLGISYG) form a transactivation region. Cys22, Cys25, and Cys27 together coordinate Zn(2+). Residues 22-37 (CTRCYCKWCCFHCYWC) form a cysteine-rich region. An N6-acetyllysine; by host PCAF modification is found at Lys28. Positions 30, 33, 34, and 37 each coordinate Zn(2+). Residues 38–48 (FTTKGLGISYG) form a core region. Positions 48–99 (GRKKRRQRPRTPQSSQIHQDFVPKQPISQARGNPTGPKESKKEVESKAKTDP) are disordered. Positions 49–57 (RKKRRQRPR) match the Nuclear localization signal, RNA-binding (TAR), and protein transduction motif. The interaction with the host capping enzyme RNGTT stretch occupies residues 49-86 (RKKRRQRPRTPQSSQIHQDFVPKQPISQARGNPTGPKE). Residues Lys50 and Lys51 each carry the N6-acetyllysine; by host EP300 and GCN5L2 modification. Arg52 and Arg53 each carry asymmetric dimethylarginine; by host PRMT6. Lys71 participates in a covalent cross-link: Glycyl lysine isopeptide (Lys-Gly) (interchain with G-Cter in ubiquitin). Positions 85-99 (KESKKEVESKAKTDP) are enriched in basic and acidic residues.

It belongs to the lentiviruses Tat family. Interacts with host CCNT1. Associates with the P-TEFb complex composed at least of Tat, P-TEFb (CDK9 and CCNT1), TAR RNA, RNA Pol II. Recruits the HATs CREBBP, TAF1/TFIID, EP300, PCAF and GCN5L2. Interacts with host KAT5/Tip60; this interaction targets the latter to degradation. Interacts with the host deacetylase SIRT1. Interacts with host capping enzyme RNGTT; this interaction stimulates RNGTT. Binds to host KDR, and to the host integrins ITGAV/ITGB3 and ITGA5/ITGB1. Interacts with host KPNB1/importin beta-1 without previous binding to KPNA1/importin alpha-1. Interacts with EIF2AK2. Interacts with host nucleosome assembly protein NAP1L1; this interaction may be required for the transport of Tat within the nucleus, since the two proteins interact at the nuclear rim. Interacts with host C1QBP/SF2P32; this interaction involves lysine-acetylated Tat. Interacts with the host chemokine receptors CCR2, CCR3 and CXCR4. Interacts with host DPP4/CD26; this interaction may trigger an anti-proliferative effect. Interacts with host LDLR. Interacts with the host extracellular matrix metalloproteinase MMP1. Interacts with host PRMT6; this interaction mediates Tat's methylation. Interacts with, and is ubiquitinated by MDM2/Hdm2. Interacts with host PSMC3 and HTATIP2. Interacts with STAB1; this interaction may overcome SATB1-mediated repression of IL2 and IL2RA (interleukin) in T cells by binding to the same domain than HDAC1. Interacts (when acetylated) with human CDK13, thereby increasing HIV-1 mRNA splicing and promoting the production of the doubly spliced HIV-1 protein Nef. Interacts with host TBP; this interaction modulates the activity of transcriptional pre-initiation complex. Interacts with host RELA. Interacts with host PLSCR1; this interaction negatively regulates Tat transactivation activity by altering its subcellular distribution. Asymmetrical arginine methylation by host PRMT6 seems to diminish the transactivation capacity of Tat and affects the interaction with host CCNT1. In terms of processing, acetylation by EP300, CREBBP, GCN5L2/GCN5 and PCAF regulates the transactivation activity of Tat. EP300-mediated acetylation of Lys-50 promotes dissociation of Tat from the TAR RNA through the competitive binding to PCAF's bromodomain. In addition, the non-acetylated Tat's N-terminus can also interact with PCAF. PCAF-mediated acetylation of Lys-28 enhances Tat's binding to CCNT1. Lys-50 is deacetylated by SIRT1. Post-translationally, polyubiquitination by host MDM2 does not target Tat to degradation, but activates its transactivation function and fosters interaction with CCNT1 and TAR RNA. Phosphorylated by EIF2AK2 on serine and threonine residues adjacent to the basic region important for TAR RNA binding and function. Phosphorylation of Tat by EIF2AK2 is dependent on the prior activation of EIF2AK2 by dsRNA.

The protein localises to the host nucleus. It localises to the host nucleolus. Its subcellular location is the host cytoplasm. It is found in the secreted. Its function is as follows. Transcriptional activator that increases RNA Pol II processivity, thereby increasing the level of full-length viral transcripts. Recognizes a hairpin structure at the 5'-LTR of the nascent viral mRNAs referred to as the transactivation responsive RNA element (TAR) and recruits the cyclin T1-CDK9 complex (P-TEFb complex) that will in turn hyperphosphorylate the RNA polymerase II to allow efficient elongation. The CDK9 component of P-TEFb and other Tat-activated kinases hyperphosphorylate the C-terminus of RNA Pol II that becomes stabilized and much more processive. Other factors such as HTATSF1/Tat-SF1, SUPT5H/SPT5, and HTATIP2 are also important for Tat's function. Besides its effect on RNA Pol II processivity, Tat induces chromatin remodeling of proviral genes by recruiting the histone acetyltransferases (HATs) CREBBP, EP300 and PCAF to the chromatin. This also contributes to the increase in proviral transcription rate, especially when the provirus integrates in transcriptionally silent region of the host genome. To ensure maximal activation of the LTR, Tat mediates nuclear translocation of NF-kappa-B by interacting with host RELA. Through its interaction with host TBP, Tat may also modulate transcription initiation. Tat can reactivate a latently infected cell by penetrating in it and transactivating its LTR promoter. In the cytoplasm, Tat is thought to act as a translational activator of HIV-1 mRNAs. In terms of biological role, extracellular circulating Tat can be endocytosed by surrounding uninfected cells via the binding to several surface receptors such as CD26, CXCR4, heparan sulfate proteoglycans (HSPG) or LDLR. Neurons are rarely infected, but they internalize Tat via their LDLR. Through its interaction with nuclear HATs, Tat is potentially able to control the acetylation-dependent cellular gene expression. Modulates the expression of many cellular genes involved in cell survival, proliferation or in coding for cytokines or cytokine receptors. Tat plays a role in T-cell and neurons apoptosis. Tat induced neurotoxicity and apoptosis probably contribute to neuroAIDS. Circulating Tat also acts as a chemokine-like and/or growth factor-like molecule that binds to specific receptors on the surface of the cells, affecting many cellular pathways. In the vascular system, Tat binds to ITGAV/ITGB3 and ITGA5/ITGB1 integrins dimers at the surface of endothelial cells and competes with bFGF for heparin-binding sites, leading to an excess of soluble bFGF. In Homo sapiens (Human), this protein is Protein Tat.